A 551-amino-acid polypeptide reads, in one-letter code: High-affinity glucose transporter (551 aa).

At 1–27 (MSLKNWLLLRDIQYEGTFYKKFPHVYN) the chain is on the cytoplasmic side. Residues 28–48 (IYVIGFIACISGLMFGFDIAS) form a helical membrane-spanning segment. Residues 49–70 (MSSMIGTDVYKDYFSNPDSLTY) are Extracellular-facing. A helical transmembrane segment spans residues 71–91 (GGITASMAGGSFLGSLISPNF). Topologically, residues 92–98 (SDAFGRK) are cytoplasmic. A helical membrane pass occupies residues 99 to 119 (VSLHICAALWIIGAILQCAAQ). Over 120-123 (DQAM) the chain is Extracellular. The chain crosses the membrane as a helical span at residues 124–144 (LIVGRVISGMGIGFGSSAAPV). Residues 145–155 (YCSEISPPKIR) are Cytoplasmic-facing. A helical transmembrane segment spans residues 156–176 (GTISGLFQFSVTVGIMVLFYI). Topologically, residues 177–190 (GYGCHFIDGAAAFR) are extracellular. A helical membrane pass occupies residues 191 to 211 (ITWGLQMVPGLILMVGVFFIP). Topologically, residues 212 to 289 (ESPRWLANHD…VGVSAQMWQQ (78 aa)) are cytoplasmic. A helical transmembrane segment spans residues 290–310 (LCGMNVMMYYIVYIFNMAGYT). Over 311–315 (GNTNL) the chain is Extracellular. The helical transmembrane segment at 316-336 (VASSIQYVLNVVMTIPALFLI) threads the bilayer. Residues 337–343 (DKFGRRP) are Cytoplasmic-facing. Residues 344–364 (VLIIGGIFMFTWLFSVAGILA) form a helical membrane-spanning segment. Over 365–395 (TYSVPAPGGVNGDDTVTIQIPSENTSAANGV) the chain is Extracellular. N-linked (GlcNAc...) asparagine glycosylation is present at N388. The helical transmembrane segment at 396-416 (IASSYLFVCFFAPTWGIGIWI) threads the bilayer. At 417–432 (YCSEIFNNMERAKGSA) the chain is on the cytoplasmic side. A helical transmembrane segment spans residues 433–453 (LSAATNWAFNFALAMFVPSAF). Topologically, residues 454-459 (KNISWK) are extracellular. A helical transmembrane segment spans residues 460–480 (TYIIFGVFSVALTIQTFFMFP). The Cytoplasmic segment spans residues 481–551 (ETKGKTLEEI…DRSDSASNSN (71 aa)).

Belongs to the major facilitator superfamily. Sugar transporter (TC 2.A.1.1) family.

It is found in the membrane. Its function is as follows. High-affinity glucose transporter. This chain is High-affinity glucose transporter (HGT1), found in Kluyveromyces lactis (strain ATCC 8585 / CBS 2359 / DSM 70799 / NBRC 1267 / NRRL Y-1140 / WM37) (Yeast).